Reading from the N-terminus, the 790-residue chain is Probable phosphoketolase (790 aa).

Belongs to the XFP family. Thiamine diphosphate is required as a cofactor.

The protein is Probable phosphoketolase of Nitrosomonas europaea (strain ATCC 19718 / CIP 103999 / KCTC 2705 / NBRC 14298).